Consider the following 1358-residue polypeptide: Retrotransposon-like protein 1 (1358 aa).

Disordered regions lie at residues 1-159 (MIEP…TEHS) and 563-616 (ADVF…TAPW). Residues 19-30 (SSKQMESSEGSS) are compositionally biased toward low complexity. The span at 65–79 (EMEELPTDLLQDMEE) shows a compositional bias: acidic residues. Residues 131–149 (AREEQEAHTDLKESGREET) are compositionally biased toward basic and acidic residues. Residues 583–592 (GSDDLSESEP) show a composition bias toward acidic residues. Transmembrane regions (helical) follow at residues 1083-1099 (LLYW…LVLL) and 1126-1146 (LILD…TQLL). Disordered stretches follow at residues 1250–1283 (DGLQ…PRHL) and 1338–1358 (QPRE…ANLD). The span at 1267–1276 (APPSHTAATH) shows a compositional bias: low complexity. Positions 1338-1347 (QPREQARLEE) are enriched in basic and acidic residues. A compositionally biased stretch (acidic residues) spans 1348 to 1358 (LPDEDEDANLD).

It is found in the membrane. In terms of biological role, plays an essential role in capillaries endothelial cells for the maintenance of feto-maternal interface and for development of the placenta. The polypeptide is Retrotransposon-like protein 1 (RTL1) (Homo sapiens (Human)).